A 225-amino-acid chain; its full sequence is 2-C-methyl-D-erythritol 4-phosphate cytidylyltransferase (225 aa).

Belongs to the IspD/TarI cytidylyltransferase family. IspD subfamily.

It carries out the reaction 2-C-methyl-D-erythritol 4-phosphate + CTP + H(+) = 4-CDP-2-C-methyl-D-erythritol + diphosphate. Its pathway is isoprenoid biosynthesis; isopentenyl diphosphate biosynthesis via DXP pathway; isopentenyl diphosphate from 1-deoxy-D-xylulose 5-phosphate: step 2/6. In terms of biological role, catalyzes the formation of 4-diphosphocytidyl-2-C-methyl-D-erythritol from CTP and 2-C-methyl-D-erythritol 4-phosphate (MEP). In Haemophilus influenzae (strain 86-028NP), this protein is 2-C-methyl-D-erythritol 4-phosphate cytidylyltransferase.